A 38-amino-acid polypeptide reads, in one-letter code: Large ribosomal subunit protein bL36 (38 aa).

This sequence belongs to the bacterial ribosomal protein bL36 family.

The sequence is that of Large ribosomal subunit protein bL36 from Amoebophilus asiaticus (strain 5a2).